We begin with the raw amino-acid sequence, 233 residues long: 1-(5-phosphoribosyl)-5-[(5-phosphoribosylamino)methylideneamino] imidazole-4-carboxamide isomerase (233 aa).

Residue aspartate 8 is the Proton acceptor of the active site. Aspartate 125 functions as the Proton donor in the catalytic mechanism.

The protein belongs to the HisA/HisF family.

The protein resides in the cytoplasm. It catalyses the reaction 1-(5-phospho-beta-D-ribosyl)-5-[(5-phospho-beta-D-ribosylamino)methylideneamino]imidazole-4-carboxamide = 5-[(5-phospho-1-deoxy-D-ribulos-1-ylimino)methylamino]-1-(5-phospho-beta-D-ribosyl)imidazole-4-carboxamide. The protein operates within amino-acid biosynthesis; L-histidine biosynthesis; L-histidine from 5-phospho-alpha-D-ribose 1-diphosphate: step 4/9. This chain is 1-(5-phosphoribosyl)-5-[(5-phosphoribosylamino)methylideneamino] imidazole-4-carboxamide isomerase, found in Thermococcus kodakarensis (strain ATCC BAA-918 / JCM 12380 / KOD1) (Pyrococcus kodakaraensis (strain KOD1)).